The chain runs to 549 residues: CDK5RAP3 protein homolog (549 aa).

3 consecutive short sequence motifs (shuffled ATG8-binding motif) follow at residues 274–277 (IDWD), 285–288 (IDWD), and 333–336 (ISWD).

The protein belongs to the CDK5RAP3 family. Substrate adapter component of the UFM1 ribosome E3 ligase (UREL) complex. Interacts with ATG8 family proteins.

In terms of biological role, substrate adapter of E3 ligase complexes mediating ufmylation, the covalent attachment of the ubiquitin-like modifier UFM1 to substrate proteins, and which is involved in various processes, such as ribosome recycling and reticulophagy (also called ER-phagy). The polypeptide is CDK5RAP3 protein homolog (Arabidopsis thaliana (Mouse-ear cress)).